Consider the following 226-residue polypeptide: Ribonuclease HII (226 aa).

Residues 29–220 enclose the RNase H type-2 domain; that stretch reads GPVAGVDEAG…VAALLHRVDN (192 aa). Positions 35, 36, and 129 each coordinate a divalent metal cation.

It belongs to the RNase HII family. Mn(2+) is required as a cofactor. Mg(2+) serves as cofactor.

The protein localises to the cytoplasm. It carries out the reaction Endonucleolytic cleavage to 5'-phosphomonoester.. Its function is as follows. Endonuclease that specifically degrades the RNA of RNA-DNA hybrids. The polypeptide is Ribonuclease HII (Rhodococcus opacus (strain B4)).